Here is a 67-residue protein sequence, read N- to C-terminus: Large ribosomal subunit protein bL32 (67 aa).

The segment covering 1 to 19 has biased composition (basic residues); that stretch reads MAVPKRKQSRANTHARRSQ. The tract at residues 1-20 is disordered; the sequence is MAVPKRKQSRANTHARRSQW.

The protein belongs to the bacterial ribosomal protein bL32 family.

The sequence is that of Large ribosomal subunit protein bL32 from Leifsonia xyli subsp. xyli (strain CTCB07).